Here is an 80-residue protein sequence, read N- to C-terminus: Large ribosomal subunit protein bL31B (80 aa).

This sequence belongs to the bacterial ribosomal protein bL31 family. Type B subfamily. As to quaternary structure, part of the 50S ribosomal subunit.

The protein is Large ribosomal subunit protein bL31B of Xanthomonas axonopodis pv. citri (strain 306).